Reading from the N-terminus, the 38-residue chain is Large ribosomal subunit protein bL36 (38 aa).

This sequence belongs to the bacterial ribosomal protein bL36 family.

In Kosmotoga olearia (strain ATCC BAA-1733 / DSM 21960 / TBF 19.5.1), this protein is Large ribosomal subunit protein bL36.